A 1158-amino-acid chain; its full sequence is ATP-dependent helicase/deoxyribonuclease subunit B (1158 aa).

One can recognise a UvrD-like helicase ATP-binding domain in the interval 1–275 (MTLHAYLGRA…QYFNQLYRFN (275 aa)). 8-15 (GRAGTGKS) contributes to the ATP binding site. The UvrD-like helicase C-terminal domain occupies 269 to 583 (NQLYRFNNQD…SIGTMDLAKV (315 aa)). Residues cysteine 784, cysteine 1112, cysteine 1115, and cysteine 1121 each coordinate [4Fe-4S] cluster.

Belongs to the helicase family. AddB/RexB type 1 subfamily. In terms of assembly, heterodimer of AddA and AddB. Mg(2+) is required as a cofactor. It depends on [4Fe-4S] cluster as a cofactor.

Functionally, the heterodimer acts as both an ATP-dependent DNA helicase and an ATP-dependent, dual-direction single-stranded exonuclease. Recognizes the chi site generating a DNA molecule suitable for the initiation of homologous recombination. The AddB subunit has 5' -&gt; 3' nuclease activity but not helicase activity. In Staphylococcus aureus (strain USA300), this protein is ATP-dependent helicase/deoxyribonuclease subunit B.